The chain runs to 368 residues: Quinolinate synthase (368 aa).

The iminosuccinate site is built by His46 and Ser63. Cys110 is a binding site for [4Fe-4S] cluster. Iminosuccinate-binding positions include 141–143 (YVN) and Ser162. Cys230 serves as a coordination point for [4Fe-4S] cluster. Iminosuccinate contacts are provided by residues 256–258 (HPE) and Thr273. Position 320 (Cys320) interacts with [4Fe-4S] cluster.

This sequence belongs to the quinolinate synthase family. Type 3 subfamily. It depends on [4Fe-4S] cluster as a cofactor.

The protein localises to the cytoplasm. The catalysed reaction is iminosuccinate + dihydroxyacetone phosphate = quinolinate + phosphate + 2 H2O + H(+). Its pathway is cofactor biosynthesis; NAD(+) biosynthesis; quinolinate from iminoaspartate: step 1/1. Its function is as follows. Catalyzes the condensation of iminoaspartate with dihydroxyacetone phosphate to form quinolinate. This Bacillus cereus (strain ZK / E33L) protein is Quinolinate synthase.